Reading from the N-terminus, the 1149-residue chain is Protogenin A (1149 aa).

The N-terminal stretch at 1-23 (MASFKRDLYLFLAVFLSISGVWS) is a signal peptide. The Extracellular portion of the chain corresponds to 24-932 (FSELFFIKEP…GFYHLDQRSM (909 aa)). 4 Ig-like domains span residues 27–117 (LFFI…ARLT), 122–209 (STFT…ATLT), 222–309 (PRII…ANIT), and 314–399 (PSLV…RLIV). Intrachain disulfides connect C48–C100 and C143–C192. N78 is a glycosylation site (N-linked (GlcNAc...) asparagine). N230 carries an N-linked (GlcNAc...) asparagine glycan. C243 and C291 are disulfide-bonded. Residues N300 and N307 are each glycosylated (N-linked (GlcNAc...) asparagine). An intrachain disulfide couples C335 to C382. 5 consecutive Fibronectin type-III domains span residues 408–502 (APRN…TLED), 504–600 (PLRA…TPKA), 605–704 (VPLA…VRDR), 711–804 (PPHH…TLPE), and 809–905 (APVG…IHTD). N-linked (GlcNAc...) asparagine glycans are attached at residues N460 and N475. N-linked (GlcNAc...) asparagine glycosylation occurs at N617. The segment at 646 to 666 (GQSEAAQAQIPPHHRQHTIGG) is disordered. 3 N-linked (GlcNAc...) asparagine glycosylation sites follow: N720, N741, and N753. A helical transmembrane segment spans residues 933 to 953 (AGIAVGVCIALTCIIICILIL). Residues 954–1149 (ACRSKTRKSC…EQEMTDLHPV (196 aa)) lie on the Cytoplasmic side of the membrane. The interval 1060–1149 (YTETSPENPP…EQEMTDLHPV (90 aa)) is disordered. Residues 1061-1073 (TETSPENPPTTLQ) are compositionally biased toward polar residues. Residues 1084 to 1106 (EGSHSSEGSHETSDSGRYSHDDT) show a composition bias toward basic and acidic residues.

The protein belongs to the immunoglobulin superfamily. DCC family. In terms of tissue distribution, expression begins in the posterior region of the embryo and this posterior restriction persists at the 4 s stage. At early somite stages, expressed along the neural tube with lower levels in the lateral and paraxial mesoderm. Expression decreases caudally and rostrally becomes restricted to the ventral part of the brain. Widespread in the spinal cord at 30 hours post-fertilization (hpf) and is also expressed in the lens from this time. At 40 hpf, expression is restricted to the lens.

It localises to the membrane. Its function is as follows. May play a role in anteroposterior axis elongation. The sequence is that of Protogenin A from Danio rerio (Zebrafish).